The sequence spans 132 residues: Small ribosomal subunit protein uS8 (132 aa).

Belongs to the universal ribosomal protein uS8 family. As to quaternary structure, part of the 30S ribosomal subunit. Contacts proteins S5 and S12.

Its function is as follows. One of the primary rRNA binding proteins, it binds directly to 16S rRNA central domain where it helps coordinate assembly of the platform of the 30S subunit. The polypeptide is Small ribosomal subunit protein uS8 (Mycobacterium marinum (strain ATCC BAA-535 / M)).